The primary structure comprises 427 residues: GPI mannosyltransferase 2 (427 aa).

The next 8 helical transmembrane spans lie at 7 to 27 (LTTV…FAPG), 119 to 139 (ATLL…ALTL), 164 to 184 (FLLA…GMLL), 197 to 217 (ITLA…FSVA), 247 to 267 (AVLF…YMHY), 318 to 338 (VPNF…TVYF), 350 to 370 (LVYI…VQII), and 404 to 424 (LYVN…ACFL).

The protein belongs to the PIGV family.

The protein resides in the endoplasmic reticulum membrane. It participates in glycolipid biosynthesis; glycosylphosphatidylinositol-anchor biosynthesis. Functionally, mannosyltransferase involved in glycosylphosphatidylinositol-anchor biosynthesis. Transfers the second mannose to the glycosylphosphatidylinositol during GPI precursor assembly. This is GPI mannosyltransferase 2 (GPI18) from Eremothecium gossypii (strain ATCC 10895 / CBS 109.51 / FGSC 9923 / NRRL Y-1056) (Yeast).